A 118-amino-acid polypeptide reads, in one-letter code: UPF0102 protein Sde_3146 (118 aa).

This sequence belongs to the UPF0102 family.

The protein is UPF0102 protein Sde_3146 of Saccharophagus degradans (strain 2-40 / ATCC 43961 / DSM 17024).